The sequence spans 91 residues: MARVTVEDAVDAIGNRFDLILVAARRARQIAVGGKRPLVDPENDKPTVIALREIELGLVDSSSMDVIDREEQQHQEAAELAAVAAIVGGNQ.

This sequence belongs to the RNA polymerase subunit omega family. In terms of assembly, the RNAP catalytic core consists of 2 alpha, 1 beta, 1 beta' and 1 omega subunit. When a sigma factor is associated with the core the holoenzyme is formed, which can initiate transcription.

It catalyses the reaction RNA(n) + a ribonucleoside 5'-triphosphate = RNA(n+1) + diphosphate. In terms of biological role, promotes RNA polymerase assembly. Latches the N- and C-terminal regions of the beta' subunit thereby facilitating its interaction with the beta and alpha subunits. The sequence is that of DNA-directed RNA polymerase subunit omega from Pseudoalteromonas translucida (strain TAC 125).